Here is a 347-residue protein sequence, read N- to C-terminus: MRPIMLVGHERPLTQVKYNKEGDLVFSCSKDSVASVWYSINGERLGTLEGHTGTIWSIDVDPFTESCVTGSADYSIKVWKVQTGTVIHTWTAPVPIKRVEFSPCGDYILAVLDDVMRYPGSINVYKVSRDPVTKEIKEFVEEPILVINTQENHKGVTVAGWSAEGKYIIACHKDGKVSKYNAKTGEFITSIELHTQTIGDIQFSPDRTYFITSSRDSMAYILDVESMEQLKSYEADCPLNSACITPLKEFVILGGGQAARDVTTTSAREGKFEARFYHKIFEDEIGRVKGHFGPLNYVAVNPQGTSYTSGGEDGFARIHHFEKSYFDFKYDVEKAAEAKEHMQTASA.

WD repeat units follow at residues 8–47 (GHERPLTQVKYNKEGDLVFSCSKDSVASVWYSINGERLGT), 50–89 (GHTGTIWSIDVDPFTESCVTGSADYSIKVWKVQTGTVIHT), 91–135 (TAPV…VTKE), 151–190 (ENHKGVTVAGWSAEGKYIIACHKDGKVSKYNAKTGEFITS), 193–232 (LHTQTIGDIQFSPDRTYFITSSRDSMAYILDVESMEQLKS), and 290–329 (GHFGPLNYVAVNPQGTSYTSGGEDGFARIHHFEKSYFDFK).

The protein belongs to the eIF-3 subunit I family. As to quaternary structure, component of the eukaryotic translation initiation factor 3 (eIF-3) complex.

Its subcellular location is the cytoplasm. Its function is as follows. Component of the eukaryotic translation initiation factor 3 (eIF-3) complex, which is involved in protein synthesis of a specialized repertoire of mRNAs and, together with other initiation factors, stimulates binding of mRNA and methionyl-tRNAi to the 40S ribosome. The eIF-3 complex specifically targets and initiates translation of a subset of mRNAs involved in cell proliferation. This is Eukaryotic translation initiation factor 3 subunit I from Vanderwaltozyma polyspora (strain ATCC 22028 / DSM 70294 / BCRC 21397 / CBS 2163 / NBRC 10782 / NRRL Y-8283 / UCD 57-17) (Kluyveromyces polysporus).